The sequence spans 256 residues: MTDLKKAAQRAIELMDLTTLNDDDTDQKVIDLCHKAKTPAGNTAAICIYPRFIPIARKTLDEIGAEDIQIATVTNFPHGNDDIAIAVLETRAAVAYGADEVDVVFPYRALMEGNETVGFELVKACKEACGEVLLKVIIESGVLADPALIRRASELSIDAGADFIKTSTGKVPVNATLEAAEIMLTVISEKNTQVGFKPAGGVRDAAQAAEFLGVAERILGADWVSPRTFRFGASSLLNSLLHTLELADAPKPTQGY.

Catalysis depends on Asp102, which acts as the Proton donor/acceptor. Lys165 serves as the catalytic Schiff-base intermediate with acetaldehyde. Lys197 acts as the Proton donor/acceptor in catalysis.

It belongs to the DeoC/FbaB aldolase family. DeoC type 2 subfamily.

The protein localises to the cytoplasm. It carries out the reaction 2-deoxy-D-ribose 5-phosphate = D-glyceraldehyde 3-phosphate + acetaldehyde. It functions in the pathway carbohydrate degradation; 2-deoxy-D-ribose 1-phosphate degradation; D-glyceraldehyde 3-phosphate and acetaldehyde from 2-deoxy-alpha-D-ribose 1-phosphate: step 2/2. Catalyzes a reversible aldol reaction between acetaldehyde and D-glyceraldehyde 3-phosphate to generate 2-deoxy-D-ribose 5-phosphate. This chain is Deoxyribose-phosphate aldolase, found in Shewanella sp. (strain W3-18-1).